The sequence spans 102 residues: NADH-quinone oxidoreductase subunit K (102 aa).

3 helical membrane-spanning segments follow: residues 5 to 25 (IAHYLTVSAVLFTLGVFGIFL), 31 to 51 (IVILMSVELILLAVNINFVAF), and 66 to 86 (FVLTVAAAEAAIGLAILVVFF).

The protein belongs to the complex I subunit 4L family. NDH-1 is composed of 14 different subunits. Subunits NuoA, H, J, K, L, M, N constitute the membrane sector of the complex.

It is found in the cell inner membrane. The catalysed reaction is a quinone + NADH + 5 H(+)(in) = a quinol + NAD(+) + 4 H(+)(out). In terms of biological role, NDH-1 shuttles electrons from NADH, via FMN and iron-sulfur (Fe-S) centers, to quinones in the respiratory chain. The immediate electron acceptor for the enzyme in this species is believed to be ubiquinone. Couples the redox reaction to proton translocation (for every two electrons transferred, four hydrogen ions are translocated across the cytoplasmic membrane), and thus conserves the redox energy in a proton gradient. The sequence is that of NADH-quinone oxidoreductase subunit K from Mesorhizobium japonicum (strain LMG 29417 / CECT 9101 / MAFF 303099) (Mesorhizobium loti (strain MAFF 303099)).